A 180-amino-acid chain; its full sequence is Large ribosomal subunit protein uL18m (180 aa).

This sequence belongs to the universal ribosomal protein uL18 family. Component of the mitochondrial ribosome large subunit (39S) which comprises a 16S rRNA and about 50 distinct proteins.

It is found in the mitochondrion. In terms of biological role, together with thiosulfate sulfurtransferase (TST), acts as a mitochondrial import factor for the cytosolic 5S rRNA. The precursor form shows RNA chaperone activity; is able to fold the 5S rRNA into an import-competent conformation that is recognized by rhodanese (TST). Both the cytoplasmic and mitochondrial forms are able to bind to the helix IV-loop D in the gamma domain of the 5S rRNA. The sequence is that of Large ribosomal subunit protein uL18m (Mrpl18) from Mus musculus (Mouse).